A 472-amino-acid chain; its full sequence is Serine/threonine-protein phosphatase T (472 aa).

TPR repeat units lie at residues 7 to 40 (ADKL…TKTP), 41 to 73 (TLFC…EPTF), and 74 to 107 (AKAY…APQN). Residues Asp-217, His-219, Asp-246, and Asn-278 each coordinate Mn(2+). His-279 acts as the Proton donor/acceptor in catalysis. 2 residues coordinate Mn(2+): His-327 and His-403.

The protein belongs to the PPP phosphatase family. PP-5 (PP-T) subfamily. The cofactor is Mg(2+). Mn(2+) is required as a cofactor.

It localises to the cytoplasm. Its subcellular location is the cytosol. The protein localises to the nucleus. The catalysed reaction is O-phospho-L-seryl-[protein] + H2O = L-seryl-[protein] + phosphate. It catalyses the reaction O-phospho-L-threonyl-[protein] + H2O = L-threonyl-[protein] + phosphate. Activated by arachidonic acid. In terms of biological role, may function as a protein phosphatase. The polypeptide is Serine/threonine-protein phosphatase T (Trypanosoma brucei brucei (strain 927/4 GUTat10.1)).